Here is a 100-residue protein sequence, read N- to C-terminus: Small ribosomal subunit protein uS17 (100 aa).

This sequence belongs to the universal ribosomal protein uS17 family. In terms of assembly, part of the 30S ribosomal subunit.

One of the primary rRNA binding proteins, it binds specifically to the 5'-end of 16S ribosomal RNA. The polypeptide is Small ribosomal subunit protein uS17 (Erythrobacter litoralis (strain HTCC2594)).